Reading from the N-terminus, the 211-residue chain is NADH-quinone oxidoreductase subunit A (211 aa).

3 consecutive transmembrane segments (helical) span residues 7–27 (WSALAFILAAIGLVIFMLVVP), 61–81 (FYLVAIFFVIFDLEALYLYAY), and 88–108 (VGWIGYATALIFVVDLLIGLI).

It belongs to the complex I subunit 3 family. In terms of assembly, NDH-1 is composed of 14 different subunits. Subunits NuoA, H, J, K, L, M, N constitute the membrane sector of the complex.

The protein resides in the cell inner membrane. It catalyses the reaction a quinone + NADH + 5 H(+)(in) = a quinol + NAD(+) + 4 H(+)(out). NDH-1 shuttles electrons from NADH, via FMN and iron-sulfur (Fe-S) centers, to quinones in the respiratory chain. The immediate electron acceptor for the enzyme in this species is believed to be ubiquinone. Couples the redox reaction to proton translocation (for every two electrons transferred, four hydrogen ions are translocated across the cytoplasmic membrane), and thus conserves the redox energy in a proton gradient. This is NADH-quinone oxidoreductase subunit A from Psychrobacter sp. (strain PRwf-1).